Here is a 72-residue protein sequence, read N- to C-terminus: ATP synthase subunit c (72 aa).

The next 2 membrane-spanning stretches (helical) occupy residues 1 to 21 (MSLG…GAGI) and 48 to 68 (MFIG…FSFI).

Belongs to the ATPase C chain family. In terms of assembly, F-type ATPases have 2 components, F(1) - the catalytic core - and F(0) - the membrane proton channel. F(1) has five subunits: alpha(3), beta(3), gamma(1), delta(1), epsilon(1). F(0) has three main subunits: a(1), b(2) and c(10-14). The alpha and beta chains form an alternating ring which encloses part of the gamma chain. F(1) is attached to F(0) by a central stalk formed by the gamma and epsilon chains, while a peripheral stalk is formed by the delta and b chains.

It is found in the cell membrane. In terms of biological role, f(1)F(0) ATP synthase produces ATP from ADP in the presence of a proton or sodium gradient. F-type ATPases consist of two structural domains, F(1) containing the extramembraneous catalytic core and F(0) containing the membrane proton channel, linked together by a central stalk and a peripheral stalk. During catalysis, ATP synthesis in the catalytic domain of F(1) is coupled via a rotary mechanism of the central stalk subunits to proton translocation. Functionally, key component of the F(0) channel; it plays a direct role in translocation across the membrane. A homomeric c-ring of between 10-14 subunits forms the central stalk rotor element with the F(1) delta and epsilon subunits. In Bacillus caldotenax, this protein is ATP synthase subunit c.